The chain runs to 765 residues: SNF-related serine/threonine-protein kinase (765 aa).

The Protein kinase domain maps to 16–269; the sequence is YDLDKTLGRG…LEEIENHPWL (254 aa). ATP-binding positions include 22–30 and Lys45; that span reads LGRGHFAVV. Residue Asp139 is the Proton acceptor of the active site. At Ser162 the chain carries Phosphoserine. At Thr173 the chain carries Phosphothreonine; by LKB1. Residues 291 to 334 form the UBA domain; the sequence is SEEEHNSIIQRMVLGDIADRDAIVEALETNRYNHITATYFLLAE. Phosphoserine occurs at positions 362, 390, 482, 495, and 518. The segment at 512–634 is disordered; that stretch reads LKMNIASPGT…RCAGPSNSMQ (123 aa). Positions 522–532 are enriched in basic residues; the sequence is VHKRYHRRKSQ. The span at 533–542 shows a compositional bias: low complexity; that stretch reads GRGSSCSSSE. Arg534 is subject to Omega-N-methylarginine. Positions 549–558 are enriched in basic and acidic residues; the sequence is ESRRRLDKDS. The span at 603 to 614 shows a compositional bias: gly residues; that stretch reads AGGGSPSSGSGG. Ser607 carries the phosphoserine modification.

This sequence belongs to the protein kinase superfamily. CAMK Ser/Thr protein kinase family. The cofactor is Mg(2+). Autophosphorylated. Phosphorylation on Thr-173 by STK11/LKB1 in complex with STE20-related adapter-alpha (STRADA) pseudo kinase and CAB39. Expressed in hematopoietic progenitor cells and leukemic cell lines. Weakly expressed in the testis.

Its subcellular location is the nucleus. It catalyses the reaction L-seryl-[protein] + ATP = O-phospho-L-seryl-[protein] + ADP + H(+). It carries out the reaction L-threonyl-[protein] + ATP = O-phospho-L-threonyl-[protein] + ADP + H(+). Activated by phosphorylation on Thr-173. In terms of biological role, may play a role in hematopoietic cell proliferation or differentiation. Potential mediator of neuronal apoptosis. This Homo sapiens (Human) protein is SNF-related serine/threonine-protein kinase.